An 85-amino-acid chain; its full sequence is Conotoxin Im28.1 (85 aa).

The N-terminal stretch at 1-21 is a signal peptide; sequence MPKLEMMLLVLLILPLCYIDA. The propeptide occupies 22 to 40; that stretch reads VGPPPPWNMEDEIIEHWQK.

It belongs to the conotoxin D superfamily. In terms of processing, contains 5 disulfide bonds. Expressed by the venom duct.

The protein resides in the secreted. Its function is as follows. Probable neurotoxin. This chain is Conotoxin Im28.1, found in Conus imperialis (Imperial cone).